The chain runs to 111 residues: Pyrimidine/purine nucleoside phosphorylase 1 (111 aa).

This sequence belongs to the nucleoside phosphorylase PpnP family.

It carries out the reaction a purine D-ribonucleoside + phosphate = a purine nucleobase + alpha-D-ribose 1-phosphate. The enzyme catalyses adenosine + phosphate = alpha-D-ribose 1-phosphate + adenine. It catalyses the reaction cytidine + phosphate = cytosine + alpha-D-ribose 1-phosphate. The catalysed reaction is guanosine + phosphate = alpha-D-ribose 1-phosphate + guanine. It carries out the reaction inosine + phosphate = alpha-D-ribose 1-phosphate + hypoxanthine. The enzyme catalyses thymidine + phosphate = 2-deoxy-alpha-D-ribose 1-phosphate + thymine. It catalyses the reaction uridine + phosphate = alpha-D-ribose 1-phosphate + uracil. The catalysed reaction is xanthosine + phosphate = alpha-D-ribose 1-phosphate + xanthine. Functionally, catalyzes the phosphorolysis of diverse nucleosides, yielding D-ribose 1-phosphate and the respective free bases. Can use uridine, adenosine, guanosine, cytidine, thymidine, inosine and xanthosine as substrates. Also catalyzes the reverse reactions. The sequence is that of Pyrimidine/purine nucleoside phosphorylase 1 from Psychrobacter arcticus (strain DSM 17307 / VKM B-2377 / 273-4).